We begin with the raw amino-acid sequence, 239 residues long: uncharacterized protein (239 aa).

The protein belongs to the initiator RepB protein family.

Mutations in ORF 239 affects the incN plasmid pUC1 E.coli polA-independence but not its autonomous replication ability. This is an uncharacterized protein from Escherichia coli.